Reading from the N-terminus, the 344-residue chain is Beta-1,4-galactosyltransferase 4 (344 aa).

Residues 1–12 (MGCNPPYLLSYR) are Cytoplasmic-facing. The chain crosses the membrane as a helical; Signal-anchor for type II membrane protein span at residues 13-38 (LRLLLLFTLCLTVLGWATSNYFVGAI). Topologically, residues 39 to 344 (QVIPRAKNFM…NITVDFWTAA (306 aa)) are lumenal. Cysteines 77 and 118 form a disulfide. Residues 129 to 133 (PHRNR), 168 to 170 (FNR), and 195 to 196 (VD) each bind UDP-alpha-D-galactose. An intrachain disulfide couples Cys189 to Cys208. Mn(2+) is bound at residue Asp196. The N-linked (GlcNAc...) asparagine glycan is linked to Asn220. UDP-alpha-D-galactose-binding residues include Tyr224 and Trp256. 258 to 261 (GEDD) contacts N-acetyl-D-glucosamine. His289 is a binding site for Mn(2+). 289-291 (HTR) lines the UDP-alpha-D-galactose pocket. Arg301 contacts N-acetyl-D-glucosamine. The N-linked (GlcNAc...) asparagine glycan is linked to Asn335.

Belongs to the glycosyltransferase 7 family. Interacts with SLC35A2/UGT1. Requires Mn(2+) as cofactor.

Its subcellular location is the golgi apparatus membrane. It is found in the secreted. It catalyses the reaction N-acetyl-D-glucosamine + UDP-alpha-D-galactose = beta-D-galactosyl-(1-&gt;4)-N-acetyl-D-glucosamine + UDP + H(+). The catalysed reaction is a beta-D-GlcNAc-(1-&gt;3)-beta-D-Gal-(1-&gt;4)-beta-D-Glc-(1&lt;-&gt;1)-Cer(d18:1(4E)) + UDP-alpha-D-galactose = a neolactoside nLc4Cer(d18:1(4E)) + UDP + H(+). It carries out the reaction 3-O-{beta-D-galactosyl-(1-&gt;3)-[6-O-sulfo-N-acetyl-beta-D-glucosaminyl-(1-&gt;6)]-N-acetyl-alpha-D-galactosaminyl}-L-seryl-[protein] + UDP-alpha-D-galactose = 3-O-{beta-D-galactosyl-(1-&gt;3)-[beta-D-galactosyl-(1-&gt;4)-6-O-sulfo-N-acetyl-beta-D-glucosaminyl-(1-&gt;6)]-N-acetyl-alpha-D-galactosaminyl}-L-seryl-[protein] + UDP + H(+). The enzyme catalyses 3-O-{beta-D-galactosyl-(1-&gt;3)-[6-O-sulfo-N-acetyl-beta-D-glucosaminyl-(1-&gt;6)]-N-acetyl-alpha-D-galactosaminyl}-L-threonyl-[protein] + UDP-alpha-D-galactose = 3-O-{beta-D-galactosyl-(1-&gt;3)-[beta-D-galactosyl-(1-&gt;4)-6-O-sulfo-N-acetyl-beta-D-glucosaminyl-(1-&gt;6)]-N-acetyl-alpha-D-galactosaminyl}-L-threonyl-[protein] + UDP + H(+). It functions in the pathway protein modification; protein glycosylation. It participates in glycolipid biosynthesis. Functionally, galactose (Gal) transferase involved in the synthesis of terminal N-acetyllactosamine (LacNac) unit present on glycan chains of glycoproteins and glycosphingolipids. Catalyzes the transfer of Gal residue via a beta1-&gt;4 linkage from UDP-Gal to the non-reducing terminal N-acetyl glucosamine 6-O-sulfate (6-O-sulfoGlcNAc) in the linearly growing chain of both N- and O-linked keratan sulfate proteoglycans. Cooperates with B3GNT7 N-acetyl glucosamine transferase and CHST6 and CHST1 sulfotransferases to construct and elongate mono- and disulfated disaccharide units [-&gt;3Galbeta1-&gt;4(6-sulfoGlcNAcbeta)1-&gt;] and [-&gt;3(6-sulfoGalbeta)1-&gt;4(6-sulfoGlcNAcbeta)1-&gt;] within keratan sulfate polymer. Transfers Gal residue via a beta1-&gt;4 linkage to terminal 6-O-sulfoGlcNAc within the LacNac unit of core 2 O-glycans forming 6-sulfo-sialyl-Lewis X (sLex). May contribute to the generation of sLex epitope on mucin-type glycoproteins that serve as ligands for SELL/L-selectin, a major regulator of leukocyte migration. In the biosynthesis pathway of neolacto-series glycosphingolipids, transfers Gal residue via a beta1-&gt;4 linkage to terminal GlcNAc of a lactotriaosylceramide (Lc3Cer) acceptor to form a neolactotetraosylceramide. The sequence is that of Beta-1,4-galactosyltransferase 4 (B4galt4) from Rattus norvegicus (Rat).